We begin with the raw amino-acid sequence, 339 residues long: Anthranilate phosphoribosyltransferase (339 aa).

Residues glycine 81, 84–85, serine 89, 91–94, 109–117, and alanine 121 contribute to the 5-phospho-alpha-D-ribose 1-diphosphate site; these read GD, NVSS, and KHGNRALSS. Residue glycine 81 participates in anthranilate binding. A Mg(2+)-binding site is contributed by serine 93. Asparagine 112 provides a ligand contact to anthranilate. Arginine 167 contacts anthranilate. Mg(2+) is bound by residues aspartate 225 and glutamate 226.

The protein belongs to the anthranilate phosphoribosyltransferase family. As to quaternary structure, homodimer. It depends on Mg(2+) as a cofactor.

The enzyme catalyses N-(5-phospho-beta-D-ribosyl)anthranilate + diphosphate = 5-phospho-alpha-D-ribose 1-diphosphate + anthranilate. Its pathway is amino-acid biosynthesis; L-tryptophan biosynthesis; L-tryptophan from chorismate: step 2/5. Catalyzes the transfer of the phosphoribosyl group of 5-phosphorylribose-1-pyrophosphate (PRPP) to anthranilate to yield N-(5'-phosphoribosyl)-anthranilate (PRA). The polypeptide is Anthranilate phosphoribosyltransferase (Brucella suis (strain ATCC 23445 / NCTC 10510)).